The chain runs to 467 residues: Serine decarboxylase 2 (467 aa).

A substrate-binding site is contributed by His178. Lys290 carries the N6-(pyridoxal phosphate)lysine modification.

The protein belongs to the group II decarboxylase family. The cofactor is pyridoxal 5'-phosphate.

The enzyme catalyses L-serine + H(+) = ethanolamine + CO2. In terms of biological role, catalyzes the biosynthesis of ethanolamine from serine. Decarboxylation of free serine is the major source of ethanolamine production in plants and ethanolamine metabolism is crucial for the synthesis of choline, phosphatidylethanolamine (PE) and phosphatidylcholine (PC), and thus for plant growth. The chain is Serine decarboxylase 2 from Oryza sativa subsp. japonica (Rice).